Reading from the N-terminus, the 248-residue chain is Probable transcriptional regulatory protein Pfl01_4410 (248 aa).

This sequence belongs to the TACO1 family.

It is found in the cytoplasm. The sequence is that of Probable transcriptional regulatory protein Pfl01_4410 from Pseudomonas fluorescens (strain Pf0-1).